We begin with the raw amino-acid sequence, 504 residues long: Glycine--tRNA ligase (504 aa).

2 residues coordinate substrate: R99 and E189. ATP is bound by residues 221-223 (RNE), 231-236 (FRVREL), 306-307 (EI), and 365-368 (GVDR). Position 236-240 (236-240 (LEQME)) interacts with substrate. 361-365 (EPSAG) provides a ligand contact to substrate.

The protein belongs to the class-II aminoacyl-tRNA synthetase family. Homodimer.

Its subcellular location is the cytoplasm. It carries out the reaction tRNA(Gly) + glycine + ATP = glycyl-tRNA(Gly) + AMP + diphosphate. Its function is as follows. Catalyzes the attachment of glycine to tRNA(Gly). This is Glycine--tRNA ligase from Deinococcus geothermalis (strain DSM 11300 / CIP 105573 / AG-3a).